The following is a 147-amino-acid chain: Large ribosomal subunit protein uL13 (147 aa).

A disordered region spans residues 128–147; that stretch reads DQHPHGAQQPQPFEITQVAQ.

This sequence belongs to the universal ribosomal protein uL13 family. Part of the 50S ribosomal subunit.

In terms of biological role, this protein is one of the early assembly proteins of the 50S ribosomal subunit, although it is not seen to bind rRNA by itself. It is important during the early stages of 50S assembly. The protein is Large ribosomal subunit protein uL13 of Streptomyces coelicolor (strain ATCC BAA-471 / A3(2) / M145).